A 504-amino-acid polypeptide reads, in one-letter code: Anaerobic nitric oxide reductase transcription regulator NorR (504 aa).

At Asp-57 the chain carries 4-aspartylphosphate. The Sigma-54 factor interaction domain maps to Met-187–Val-416. ATP-binding positions include Gly-215–Glu-222 and Ala-278–Glu-287. The segment at residues Trp-479 to Lys-498 is a DNA-binding region (H-T-H motif).

It functions in the pathway nitrogen metabolism; nitric oxide reduction. Its function is as follows. Required for the expression of anaerobic nitric oxide (NO) reductase, acts as a transcriptional activator for at least the norVW operon. Activation also requires sigma-54. The protein is Anaerobic nitric oxide reductase transcription regulator NorR of Escherichia coli O7:K1 (strain IAI39 / ExPEC).